The following is a 660-amino-acid chain: Peroxisomal acyl-coenzyme A oxidase 1 (660 aa).

At Ser26 the chain carries Phosphoserine. Residue Lys65 is modified to N6-acetyllysine. N6-succinyllysine is present on residues Lys89 and Lys90. Thr139 and Gly178 together coordinate FAD. N6-acetyllysine is present on Lys216. Lys241 carries the N6-succinyllysine modification. N6-acetyllysine occurs at positions 255, 267, and 272. Lys349 bears the N6-succinyllysine mark. Glu421 (proton acceptor) is an active-site residue. Lys437 and Lys446 each carry N6-acetyllysine; alternate. Residues Lys437 and Lys446 each carry the N6-succinyllysine; alternate modification. N6-acetyllysine is present on Lys500. Lys512 is modified (N6-acetyllysine; alternate). An N6-succinyllysine; alternate modification is found at Lys512. Lys542 is subject to N6-succinyllysine. An N6-acetyllysine; alternate modification is found at Lys637. At Lys637 the chain carries N6-succinyllysine; alternate. N6-succinyllysine is present on Lys643. Residue Ser649 is modified to Phosphoserine. Lys651 carries the post-translational modification N6-acetyllysine. Lys654 carries the post-translational modification N6-succinyllysine. The short motif at Ser658–Leu660 is the Microbody targeting signal element.

The protein belongs to the acyl-CoA oxidase family. In terms of assembly, homodimer. Interacts with LONP2. Requires FAD as cofactor.

The protein resides in the peroxisome. It carries out the reaction a 2,3-saturated acyl-CoA + O2 = a (2E)-enoyl-CoA + H2O2. It catalyses the reaction hexadecanoyl-CoA + O2 = (2E)-hexadecenoyl-CoA + H2O2. The catalysed reaction is dodecanoyl-CoA + O2 = (2E)-dodecenoyl-CoA + H2O2. The enzyme catalyses octanoyl-CoA + O2 = (2E)-octenoyl-CoA + H2O2. It carries out the reaction decanoyl-CoA + O2 = (2E)-decenoyl-CoA + H2O2. It catalyses the reaction tetradecanoyl-CoA + O2 = (2E)-tetradecenoyl-CoA + H2O2. The catalysed reaction is hexadecanedioyl-CoA + O2 = (2E)-hexadecenedioyl-CoA + H2O2. The enzyme catalyses tetracosanoyl-CoA + O2 = (2E)-tetracosenoyl-CoA + H2O2. It carries out the reaction glutaryl-CoA + O2 = (2E)-glutaconyl-CoA + H2O2. It catalyses the reaction hexanoyl-CoA + O2 = (2E)-hexenoyl-CoA + H2O2. The catalysed reaction is octadecanoyl-CoA + O2 = (2E)-octadecenoyl-CoA + H2O2. The enzyme catalyses (5Z,8Z,11Z,14Z,17Z)-eicosapentaenoyl-CoA + O2 = (2E,5Z,8Z,11Z,14Z,17Z)-icosahexaenoyl-CoA + H2O2. It carries out the reaction (6Z,9Z,12Z,15Z,18Z,21Z)-tetracosahexaenoyl-CoA + O2 = (2E,6Z,9Z,12Z,15Z,18Z,21Z)-tetracosaheptaenoyl-CoA + H2O2. It functions in the pathway lipid metabolism; peroxisomal fatty acid beta-oxidation. Involved in the initial and rate-limiting step of peroxisomal beta-oxidation of straight-chain saturated and unsaturated very-long-chain fatty acids. Catalyzes the desaturation of fatty acyl-CoAs such as palmitoyl-CoA (hexadecanoyl-CoA) to 2-trans-enoyl-CoAs ((2E)-enoyl-CoAs) such as (2E)-hexadecenoyl-CoA, and donates electrons directly to molecular oxygen (O(2)), thereby producing hydrogen peroxide (H(2)O(2)). In Bos taurus (Bovine), this protein is Peroxisomal acyl-coenzyme A oxidase 1.